A 363-amino-acid chain; its full sequence is Phosphoserine aminotransferase (363 aa).

R42 lines the L-glutamate pocket. Pyridoxal 5'-phosphate contacts are provided by residues 76–77 (GR), W102, T156, D175, and Q198. K199 carries the N6-(pyridoxal phosphate)lysine modification. Residue 240-241 (NT) coordinates pyridoxal 5'-phosphate.

Belongs to the class-V pyridoxal-phosphate-dependent aminotransferase family. SerC subfamily. As to quaternary structure, homodimer. Requires pyridoxal 5'-phosphate as cofactor.

The protein localises to the cytoplasm. It catalyses the reaction O-phospho-L-serine + 2-oxoglutarate = 3-phosphooxypyruvate + L-glutamate. The enzyme catalyses 4-(phosphooxy)-L-threonine + 2-oxoglutarate = (R)-3-hydroxy-2-oxo-4-phosphooxybutanoate + L-glutamate. It functions in the pathway amino-acid biosynthesis; L-serine biosynthesis; L-serine from 3-phospho-D-glycerate: step 2/3. It participates in cofactor biosynthesis; pyridoxine 5'-phosphate biosynthesis; pyridoxine 5'-phosphate from D-erythrose 4-phosphate: step 3/5. Functionally, catalyzes the reversible conversion of 3-phosphohydroxypyruvate to phosphoserine and of 3-hydroxy-2-oxo-4-phosphonooxybutanoate to phosphohydroxythreonine. This chain is Phosphoserine aminotransferase, found in Shewanella baltica (strain OS185).